We begin with the raw amino-acid sequence, 268 residues long: Shikimate dehydrogenase (NADP(+)) (268 aa).

Shikimate-binding positions include 13–15 (SLS) and threonine 60. Lysine 64 acts as the Proton acceptor in catalysis. Glutamate 76 contributes to the NADP(+) binding site. Shikimate contacts are provided by asparagine 85 and aspartate 100. NADP(+) contacts are provided by residues 124 to 128 (GAGGA), 148 to 153 (NRTMAR), and isoleucine 209. Residue tyrosine 211 coordinates shikimate. Glycine 232 contacts NADP(+).

The protein belongs to the shikimate dehydrogenase family. In terms of assembly, homodimer.

The catalysed reaction is shikimate + NADP(+) = 3-dehydroshikimate + NADPH + H(+). The protein operates within metabolic intermediate biosynthesis; chorismate biosynthesis; chorismate from D-erythrose 4-phosphate and phosphoenolpyruvate: step 4/7. Functionally, involved in the biosynthesis of the chorismate, which leads to the biosynthesis of aromatic amino acids. Catalyzes the reversible NADPH linked reduction of 3-dehydroshikimate (DHSA) to yield shikimate (SA). The polypeptide is Shikimate dehydrogenase (NADP(+)) (Staphylococcus aureus (strain bovine RF122 / ET3-1)).